Consider the following 296-residue polypeptide: Haloalkane dehalogenase (296 aa).

The AB hydrolase-1 domain occupies 31 to 155 (PILFQHGNPT…QDRDLFQAFR (125 aa)). Position 38 (N38) interacts with chloride. Residue D108 is the Nucleophile of the active site. W109 is a binding site for chloride. The Proton donor role is filled by E132. H272 functions as the Proton acceptor in the catalytic mechanism.

Belongs to the haloalkane dehalogenase family. Type 2 subfamily. Monomer.

It is found in the periplasm. It carries out the reaction 1-haloalkane + H2O = a halide anion + a primary alcohol + H(+). The catalysed reaction is (3R,6R)-1,3,4,6-tetrachlorocyclohexa-1,4-diene + 2 H2O = 2,5-dichlorocyclohexa-2,5-dien-1,4-diol + 2 chloride + 2 H(+). Its pathway is xenobiotic degradation; gamma-hexachlorocyclohexane degradation. With respect to regulation, competitively inhibited by the key pollutants 1,2-dichloroethane (1,2-DCE) and 1,2-dichloropropane (1,2-DCP). Functionally, catalyzes hydrolytic cleavage of carbon-halogen bonds in halogenated aliphatic compounds, leading to the formation of the corresponding primary alcohols, halide ions and protons. Has a broad substrate specificity since not only monochloroalkanes (C3 to C10) but also dichloroalkanes (&gt; C3), bromoalkanes, and chlorinated aliphatic alcohols are good substrates. Shows almost no activity with 1,2-dichloroethane, but very high activity with the brominated analog. Is involved in the degradation of the important environmental pollutant gamma-hexachlorocyclohexane (gamma-HCH or lindane) as it also catalyzes conversion of 1,3,4,6-tetrachloro-1,4-cyclohexadiene (1,4-TCDN) to 2,5-dichloro-2,5-cyclohexadiene-1,4-diol (2,5-DDOL) via the intermediate 2,4,5-trichloro-2,5-cyclohexadiene-1-ol (2,4,5-DNOL). This degradation pathway allows S.japonicum UT26 to grow on gamma-HCH as the sole source of carbon and energy. This Sphingobium indicum (strain DSM 16413 / CCM 7287 / MTCC 6362 / UT26 / NBRC 101211 / UT26S) (Sphingobium japonicum) protein is Haloalkane dehalogenase.